The sequence spans 159 residues: Phosphopantetheine adenylyltransferase (159 aa).

Threonine 10 is a substrate binding site. ATP is bound by residues 10–11 (TF) and histidine 18. 3 residues coordinate substrate: lysine 42, leucine 74, and arginine 88. ATP is bound by residues 89-91 (GLR), glutamate 99, and 124-130 (NSFISST).

Belongs to the bacterial CoaD family. In terms of assembly, homohexamer. Requires Mg(2+) as cofactor.

It is found in the cytoplasm. It carries out the reaction (R)-4'-phosphopantetheine + ATP + H(+) = 3'-dephospho-CoA + diphosphate. It participates in cofactor biosynthesis; coenzyme A biosynthesis; CoA from (R)-pantothenate: step 4/5. Reversibly transfers an adenylyl group from ATP to 4'-phosphopantetheine, yielding dephospho-CoA (dPCoA) and pyrophosphate. The polypeptide is Phosphopantetheine adenylyltransferase (Shewanella halifaxensis (strain HAW-EB4)).